The chain runs to 217 residues: MDIERVNDTTIKFFITYKDIEDRGFDRDEIWYNRERGEELFFEMMNEANDRDEFELDGPLWIQVHALDKGLEIVVTRGQVSDGNVKLEIPVSQDKENTDENIVDLMTGHSSEDDEGIDTDQLEIVIGFNDFEDIISLSHNFFIDDLENELYHFEGRYYLHVLFNDDQYNEDEQDDMLSQMLEYGYETDLSIHRMQEYGKEIIGEYALKHLRGHFPQN.

The protein belongs to the MecA family. Homodimer.

In terms of biological role, enables the recognition and targeting of unfolded and aggregated proteins to the ClpC protease or to other proteins involved in proteolysis. Acts negatively in the development of competence by binding ComK and recruiting it to the ClpCP protease. When overexpressed, inhibits sporulation. Also involved in Spx degradation by ClpC. This Alkalihalophilus pseudofirmus (strain ATCC BAA-2126 / JCM 17055 / OF4) (Bacillus pseudofirmus) protein is Adapter protein MecA.